Consider the following 87-residue polypeptide: Cell division topological specificity factor (87 aa).

Belongs to the MinE family.

Its function is as follows. Prevents the cell division inhibition by proteins MinC and MinD at internal division sites while permitting inhibition at polar sites. This ensures cell division at the proper site by restricting the formation of a division septum at the midpoint of the long axis of the cell. The sequence is that of Cell division topological specificity factor from Blochmanniella pennsylvanica (strain BPEN).